Consider the following 442-residue polypeptide: tRNA modification GTPase MnmE (442 aa).

Residues Arg22, Glu79, and Lys119 each contribute to the (6S)-5-formyl-5,6,7,8-tetrahydrofolate site. One can recognise a TrmE-type G domain in the interval Gly216 to Ala366. Asn226 provides a ligand contact to K(+). Residues Asn226–Ser231, Ser245–Thr251, and Asp270–Gly273 each bind GTP. Ser230 is a Mg(2+) binding site. K(+) is bound by residues Ser245, Ile247, and Thr250. Thr251 contributes to the Mg(2+) binding site. Position 442 (Lys442) interacts with (6S)-5-formyl-5,6,7,8-tetrahydrofolate.

This sequence belongs to the TRAFAC class TrmE-Era-EngA-EngB-Septin-like GTPase superfamily. TrmE GTPase family. Homodimer. Heterotetramer of two MnmE and two MnmG subunits. K(+) serves as cofactor.

It is found in the cytoplasm. Functionally, exhibits a very high intrinsic GTPase hydrolysis rate. Involved in the addition of a carboxymethylaminomethyl (cmnm) group at the wobble position (U34) of certain tRNAs, forming tRNA-cmnm(5)s(2)U34. The polypeptide is tRNA modification GTPase MnmE (Mesomycoplasma hyopneumoniae (strain J / ATCC 25934 / NCTC 10110) (Mycoplasma hyopneumoniae)).